A 186-amino-acid polypeptide reads, in one-letter code: Ribosome-recycling factor (186 aa).

Belongs to the RRF family.

Its subcellular location is the cytoplasm. Responsible for the release of ribosomes from messenger RNA at the termination of protein biosynthesis. May increase the efficiency of translation by recycling ribosomes from one round of translation to another. The sequence is that of Ribosome-recycling factor from Rickettsia felis (strain ATCC VR-1525 / URRWXCal2) (Rickettsia azadi).